A 348-amino-acid polypeptide reads, in one-letter code: Eukaryotic translation initiation factor 3 subunit H (348 aa).

In terms of domain architecture, MPN spans 35–169 (VQIDGLVVLK…LKAYRLTPKL (135 aa)). Low complexity predominate over residues 267–285 (QQQKHQYQQRRQQENIQRQ). The tract at residues 267-311 (QQQKHQYQQRRQQENIQRQSRGEPPLPEEDINKLFKPPQPPPRME) is disordered.

Belongs to the eIF-3 subunit H family. Component of the eukaryotic translation initiation factor 3 (eIF-3) complex, which is composed of 13 subunits: EIF3A, EIF3B, EIF3C, EIF3D, EIF3E, EIF3F, EIF3G, EIF3H, EIF3I, EIF3J, EIF3K, EIF3L and EIF3M.

The protein localises to the cytoplasm. Component of the eukaryotic translation initiation factor 3 (eIF-3) complex, which is involved in protein synthesis of a specialized repertoire of mRNAs and, together with other initiation factors, stimulates binding of mRNA and methionyl-tRNAi to the 40S ribosome. The eIF-3 complex specifically targets and initiates translation of a subset of mRNAs involved in cell proliferation. This is Eukaryotic translation initiation factor 3 subunit H from Taeniopygia guttata (Zebra finch).